The sequence spans 317 residues: Melanocyte-stimulating hormone receptor (317 aa).

The Extracellular segment spans residues 1–37 (MPVQGSQRRLLGSLNSTPTATPHLGLAANQTGAWCLE). A glycan (N-linked (GlcNAc...) asparagine) is linked at Asn-29. Residues 38–63 (VSIPDGLFLSLGLVSLVENVLVVTAI) traverse the membrane as a helical segment. Topologically, residues 64–72 (AKNRNLHSP) are cytoplasmic. The chain crosses the membrane as a helical span at residues 73–93 (MYCFICCLALSDLLVSGSNML). Topologically, residues 94 to 118 (ETAVTLLLEAGALAARAAVVQQLDN) are extracellular. The helical transmembrane segment at 119–140 (VIDVITCSSMLSSLCFLGAIAV) threads the bilayer. The Cytoplasmic portion of the chain corresponds to 141-163 (DRYISIFYALRYHSIVTLPRARR). Residues 164 to 183 (AVAAIWVASVLFSMLFIAYY) traverse the membrane as a helical segment. The Extracellular portion of the chain corresponds to 184–191 (DHAAVLLC). The chain crosses the membrane as a helical span at residues 192-211 (LVVFFLAMLVLMAVLYVHML). Topologically, residues 212 to 240 (ARACQHAQGIARLHKRQRPAHQGFGLKGA) are cytoplasmic. The helical transmembrane segment at 241-266 (ATLTILLGIFFLCWGPFFLHLTLIVL) threads the bilayer. The Extracellular portion of the chain corresponds to 267-279 (CPQHPTCSCIFKN). A helical transmembrane segment spans residues 280 to 300 (FNLFLALIICNAIIDPLIYAF). Topologically, residues 301–317 (RSQELRRTLKEVLLCSW) are cytoplasmic. Cys-315 is lipidated: S-palmitoyl cysteine.

This sequence belongs to the G-protein coupled receptor 1 family. Interacts with MGRN1, but does not undergo MGRN1-mediated ubiquitination; this interaction competes with GNAS-binding and thus inhibits agonist-induced cAMP production. Interacts with OPN3; the interaction results in a decrease in MC1R-mediated cAMP signaling and ultimately a decrease in melanin production in melanocytes.

It is found in the cell membrane. Its function is as follows. Receptor for MSH (alpha, beta and gamma) and ACTH. The activity of this receptor is mediated by G proteins which activate adenylate cyclase. Mediates melanogenesis, the production of eumelanin (black/brown) and phaeomelanin (red/yellow), via regulation of cAMP signaling in melanocytes. This Allenopithecus nigroviridis (Allen's swamp monkey) protein is Melanocyte-stimulating hormone receptor (MC1R).